A 1410-amino-acid chain; its full sequence is MKDLLNLLKNQGPSDEFDGIRIGLASPDMIRSWSYGEVKKPETINYRTFKPEREGLFCAKVFGPVKDYECLCGKYKRMKHRGIICEKCGVEVTLAKVRRDRMAHIELASPVAHIWFLKSLPSRIGLLLDMTLRSIERVLYFESYVVTDPGMTTLEKGQLLTDEQYFEAMEEFGDEFEAKMGAEAIQQLMKDIELEREAQEIREQIPNTNSETKIKKLSKRLKLLEAFIQSGNKPEWMVLEALPVLPPDLRPLVPLDGGRFATSDLNDLYRRVINRNNRLKRLLDLNAPDIIVRNEKRMLQESVDALLDNGRRGRAITGSNKRPLKSLADMIKGKQGRFRQNLLGKRVDYSGRSVIVTGPTLRLHQCGLPKKMALELFKPFIFSKLELRGLATTIKAAKKMVEREEPVVWDILDEVIREHPVLLNRAPTLHRLGIQAFEPVLIEGKAIQLHPLVCAAYNADFDGDQMAVHVPLTLEAQLEARALMMSTNNILSPASGEPIIVPSQDVVLGLYWMTRERVNDKGEGMIFSDIKEVSRAFYSKQVGLQARIKVRIDETIMEESGESESSYRMVDTTVGRMLLWEIVPKGIPFEMINKPMVKKAISAVINFCYRIVGLKATVIFADQLMYMGYDFSTKSGSSIGVNDFEIPEAKAGMIERADAEVKEIEAQYASGLVAQGEKYNKVIDIWSRANDLVAKSMMEGISKETVKNKQGEDEEQASFNSVFMYADSGARGSPAQIRQLAGMRGLMARPDGSIIETPITANFREGLNVLQYFISTHGARKGLADTALKTANSGYLTRRLVDVAQDVVITEQDCGTDEGLSMTPVIEGGDVIESLGDRILGRVVARDVIRPNSDEILVPAGTMIDEKWVERIESMGIDEVTVRSAISCDAVFGICAQCYGRDLARGHRANVGEAIGVIAAQSIGEPGTQLTMRTFHIGGAASRASAADSVEVKQEGTVRLHNIKVVARESGELIAVSRSGELALADAAGRERERYKIPYGAVITVKEGEQVKGGSIIAKWDPHTHPIVTEVAGRVVLAGMEDGLSIRKQTDELTGLTTIEILDPSERPSAGKDLKPAVTLVDENGNELKLANSEQPAHYMLPGKSIFSLKNGDTVGVGDIIARIPQEGSKTRDITGGLPRVADLFEARKPKEPSILAEISGTVSFGKETKGKRRLVITPPNGAVLEDGSTHYEVLIPKHRHLTVFEGETVAKGEVVSDGPSNPHDILRLKGVEALANYITNEIQDVYRLQGVKINDKHVEVIVRQMLRKVEITGMGDSSFVKGEQVEYIAVLQENEKLRAEGRQPARFERQLLGITKASLATESFISAASFQETTRVLTEASVTGKIDNLRGLKENVVVGRLIPAGTGLAYHAERRRKREDQAGSKAGSDTVSAAEIEAALTEALKSSAS.

Residues Cys-70, Cys-72, Cys-85, and Cys-88 each coordinate Zn(2+). Mg(2+) is bound by residues Asp-460, Asp-462, and Asp-464. Residues Cys-814, Cys-888, Cys-895, and Cys-898 each contribute to the Zn(2+) site.

It belongs to the RNA polymerase beta' chain family. As to quaternary structure, the RNAP catalytic core consists of 2 alpha, 1 beta, 1 beta' and 1 omega subunit. When a sigma factor is associated with the core the holoenzyme is formed, which can initiate transcription. Mg(2+) is required as a cofactor. Zn(2+) serves as cofactor.

The enzyme catalyses RNA(n) + a ribonucleoside 5'-triphosphate = RNA(n+1) + diphosphate. DNA-dependent RNA polymerase catalyzes the transcription of DNA into RNA using the four ribonucleoside triphosphates as substrates. The chain is DNA-directed RNA polymerase subunit beta' from Saccharophagus degradans (strain 2-40 / ATCC 43961 / DSM 17024).